Here is a 233-residue protein sequence, read N- to C-terminus: Sugar fermentation stimulation protein homolog (233 aa).

The protein belongs to the SfsA family.

This chain is Sugar fermentation stimulation protein homolog, found in Pyrobaculum neutrophilum (strain DSM 2338 / JCM 9278 / NBRC 100436 / V24Sta) (Thermoproteus neutrophilus).